The sequence spans 339 residues: Ketol-acid reductoisomerase (NADP(+)) (339 aa).

Positions 1–182 (MRVYYDRDAD…GGGRSGIIET (182 aa)) constitute a KARI N-terminal Rossmann domain. NADP(+) contacts are provided by residues 24 to 27 (YGSQ), Arg48, Ser51, Ser53, and 83 to 86 (DELQ). His108 is a catalytic residue. Residue Gly134 coordinates NADP(+). The KARI C-terminal knotted domain occupies 183-328 (TFREECETDL…GRLRAMMPWI (146 aa)). Asp191, Glu195, Glu227, and Glu231 together coordinate Mg(2+). Ser252 is a substrate binding site.

It belongs to the ketol-acid reductoisomerase family. Mg(2+) is required as a cofactor.

It carries out the reaction (2R)-2,3-dihydroxy-3-methylbutanoate + NADP(+) = (2S)-2-acetolactate + NADPH + H(+). The enzyme catalyses (2R,3R)-2,3-dihydroxy-3-methylpentanoate + NADP(+) = (S)-2-ethyl-2-hydroxy-3-oxobutanoate + NADPH + H(+). Its pathway is amino-acid biosynthesis; L-isoleucine biosynthesis; L-isoleucine from 2-oxobutanoate: step 2/4. It functions in the pathway amino-acid biosynthesis; L-valine biosynthesis; L-valine from pyruvate: step 2/4. Functionally, involved in the biosynthesis of branched-chain amino acids (BCAA). Catalyzes an alkyl-migration followed by a ketol-acid reduction of (S)-2-acetolactate (S2AL) to yield (R)-2,3-dihydroxy-isovalerate. In the isomerase reaction, S2AL is rearranged via a Mg-dependent methyl migration to produce 3-hydroxy-3-methyl-2-ketobutyrate (HMKB). In the reductase reaction, this 2-ketoacid undergoes a metal-dependent reduction by NADPH to yield (R)-2,3-dihydroxy-isovalerate. In Rhodospirillum rubrum (strain ATCC 11170 / ATH 1.1.1 / DSM 467 / LMG 4362 / NCIMB 8255 / S1), this protein is Ketol-acid reductoisomerase (NADP(+)).